The chain runs to 295 residues: Phosphatidylserine decarboxylase proenzyme (295 aa).

Catalysis depends on charge relay system; for autoendoproteolytic cleavage activity residues D90 and S258. The Schiff-base intermediate with substrate; via pyruvic acid; for decarboxylase activity role is filled by S258. S258 carries the post-translational modification Pyruvic acid (Ser); by autocatalysis.

This sequence belongs to the phosphatidylserine decarboxylase family. PSD-B subfamily. Prokaryotic type I sub-subfamily. Heterodimer of a large membrane-associated beta subunit and a small pyruvoyl-containing alpha subunit. Pyruvate is required as a cofactor. Post-translationally, is synthesized initially as an inactive proenzyme. Formation of the active enzyme involves a self-maturation process in which the active site pyruvoyl group is generated from an internal serine residue via an autocatalytic post-translational modification. Two non-identical subunits are generated from the proenzyme in this reaction, and the pyruvate is formed at the N-terminus of the alpha chain, which is derived from the carboxyl end of the proenzyme. The autoendoproteolytic cleavage occurs by a canonical serine protease mechanism, in which the side chain hydroxyl group of the serine supplies its oxygen atom to form the C-terminus of the beta chain, while the remainder of the serine residue undergoes an oxidative deamination to produce ammonia and the pyruvoyl prosthetic group on the alpha chain. During this reaction, the Ser that is part of the protease active site of the proenzyme becomes the pyruvoyl prosthetic group, which constitutes an essential element of the active site of the mature decarboxylase.

The protein resides in the cell membrane. The catalysed reaction is a 1,2-diacyl-sn-glycero-3-phospho-L-serine + H(+) = a 1,2-diacyl-sn-glycero-3-phosphoethanolamine + CO2. The protein operates within phospholipid metabolism; phosphatidylethanolamine biosynthesis; phosphatidylethanolamine from CDP-diacylglycerol: step 2/2. In terms of biological role, catalyzes the formation of phosphatidylethanolamine (PtdEtn) from phosphatidylserine (PtdSer). The polypeptide is Phosphatidylserine decarboxylase proenzyme (Blochmanniella pennsylvanica (strain BPEN)).